Consider the following 591-residue polypeptide: Isocitrate dehydrogenase kinase/phosphatase (591 aa).

Residues 322–328 and Lys-343 contribute to the ATP site; that span reads APGIRGL. Asp-378 is a catalytic residue.

This sequence belongs to the AceK family.

The protein resides in the cytoplasm. The catalysed reaction is L-seryl-[isocitrate dehydrogenase] + ATP = O-phospho-L-seryl-[isocitrate dehydrogenase] + ADP + H(+). In terms of biological role, bifunctional enzyme which can phosphorylate or dephosphorylate isocitrate dehydrogenase (IDH) on a specific serine residue. This is a regulatory mechanism which enables bacteria to bypass the Krebs cycle via the glyoxylate shunt in response to the source of carbon. When bacteria are grown on glucose, IDH is fully active and unphosphorylated, but when grown on acetate or ethanol, the activity of IDH declines drastically concomitant with its phosphorylation. The sequence is that of Isocitrate dehydrogenase kinase/phosphatase from Aromatoleum aromaticum (strain DSM 19018 / LMG 30748 / EbN1) (Azoarcus sp. (strain EbN1)).